Reading from the N-terminus, the 173-residue chain is CKLF-like MARVEL transmembrane domain-containing protein 8 (173 aa).

An MARVEL domain is found at 36-168 (FLRTPPGLLI…NTYFSFIAWR (133 aa)). Helical transmembrane passes span 41–61 (PGLLIVAEIVLGLLVWTLIAG), 70–90 (FGWVMFVAVFYWVLTVFFLIV), 105–125 (TTVGLCFNGSAFVLYFSAAIV), and 147–167 (FFAFLVTICYAGNTYFSFIAW).

This sequence belongs to the chemokine-like factor family.

It is found in the membrane. This is CKLF-like MARVEL transmembrane domain-containing protein 8 (Cmtm8) from Mus musculus (Mouse).